The primary structure comprises 345 residues: Tetraacyldisaccharide 4'-kinase (345 aa).

An ATP-binding site is contributed by 61–68; it reads TAGGTGKT.

The protein belongs to the LpxK family.

The catalysed reaction is a lipid A disaccharide + ATP = a lipid IVA + ADP + H(+). The protein operates within glycolipid biosynthesis; lipid IV(A) biosynthesis; lipid IV(A) from (3R)-3-hydroxytetradecanoyl-[acyl-carrier-protein] and UDP-N-acetyl-alpha-D-glucosamine: step 6/6. In terms of biological role, transfers the gamma-phosphate of ATP to the 4'-position of a tetraacyldisaccharide 1-phosphate intermediate (termed DS-1-P) to form tetraacyldisaccharide 1,4'-bis-phosphate (lipid IVA). This chain is Tetraacyldisaccharide 4'-kinase, found in Xanthomonas axonopodis pv. citri (strain 306).